The chain runs to 1029 residues: FYVE, RhoGEF and PH domain-containing protein tag-77 (1029 aa).

Basic and acidic residues-rich tracts occupy residues 1–12 (MKYDMNHRKNSD) and 20–39 (TVKE…DNRF). Disordered stretches follow at residues 1–155 (MKYD…ATSE), 185–254 (VPRM…ERKT), and 279–370 (NNGV…EKDD). The segment covering 42–56 (QPPPPPSPRRAPPPP) has biased composition (pro residues). Low complexity-rich tracts occupy residues 76–85 (PPSSSESSEN) and 122–133 (SSSTSDVSSQNS). Polar residues-rich tracts occupy residues 141–155 (SCTT…ATSE) and 200–211 (PISQVSTLSQVS). Residues 212 to 227 (DEFDEGDTSASDEESM) are compositionally biased toward acidic residues. Residues 316–334 (SPTSGMSSSSTDDFSRITS) show a composition bias toward low complexity. The span at 335–347 (MTSDRSSILTSHS) shows a compositional bias: polar residues. One can recognise a DH domain in the interval 375-572 (KLHYAAVEFL…ENVTQAVNQK (198 aa)). Positions 593-696 (NVLEPGRVLI…WTDDLTKAQY (104 aa)) constitute a PH domain. Positions 810, 823, 826, 831, 834, 851, and 854 each coordinate Zn(2+). The FYVE-type; degenerate zinc-finger motif lies at 810 to 859 (CSTEFNIINRRHHCRDCGWLICKFCKGQAPLSKYDFTKQNVCSECFDRHY).

The protein localises to the cytoplasm. Its subcellular location is the cytoskeleton. In terms of biological role, activates cdc-42, a member of the Ras-like family of Rho- and Rac proteins, by exchanging bound GDP for free GTP. May play a role in regulating the actin cytoskeleton and cell shape. Required for normal lifespan. This Caenorhabditis elegans protein is FYVE, RhoGEF and PH domain-containing protein tag-77.